Consider the following 102-residue polypeptide: Citrate lyase acyl carrier protein (102 aa).

Serine 14 is subject to O-(phosphoribosyl dephospho-coenzyme A)serine.

This sequence belongs to the CitD family. Oligomer with a subunit composition of (alpha,beta,gamma)6.

The protein resides in the cytoplasm. Its function is as follows. Covalent carrier of the coenzyme of citrate lyase. The polypeptide is Citrate lyase acyl carrier protein (Streptococcus equi subsp. zooepidemicus (strain H70)).